The chain runs to 266 residues: MEILIVNDDGIYSPSLIALYNALKEKFSDANITIVAPTNQQSGIGRAISLFEPLRMTKVKLAKDIVGYAVSGTPTDCVILGIYQILKKVPDLVISGINIGENLGTEIMTSGTLGAAFEAAHHGAKSIASSLQITSDHLKFKELDIPINFEIPAKITAKIAEKYLDYDMPCDVLNINIPENATLETPIEITRLARKMYTTHVEERIDPRGRSYYWIDGYPIFEEEEDTDVYVLRKKRHISITPLTLDTTIKNLDEFKEKYGKILCEM.

A divalent metal cation is bound by residues D8, D9, S42, and N98.

It belongs to the SurE nucleotidase family. A divalent metal cation is required as a cofactor.

Its subcellular location is the cytoplasm. The catalysed reaction is a ribonucleoside 5'-phosphate + H2O = a ribonucleoside + phosphate. Functionally, nucleotidase that shows phosphatase activity on nucleoside 5'-monophosphates. The polypeptide is 5'-nucleotidase SurE (Methanocaldococcus jannaschii (strain ATCC 43067 / DSM 2661 / JAL-1 / JCM 10045 / NBRC 100440) (Methanococcus jannaschii)).